The sequence spans 342 residues: GTPase Obg (342 aa).

Positions 1 to 159 (MKFLDLCKVY…RTIWLRLKLI (159 aa)) constitute an Obg domain. One can recognise an OBG-type G domain in the interval 160-327 (ADAGLLGLPN…VLRALWAEID (168 aa)). GTP-binding positions include 166-173 (GLPNAGKS), 191-195 (FTTLV), 212-215 (DIPG), 279-282 (NKID), and 308-310 (SGV). Mg(2+) is bound by residues S173 and T193.

The protein belongs to the TRAFAC class OBG-HflX-like GTPase superfamily. OBG GTPase family. In terms of assembly, monomer. It depends on Mg(2+) as a cofactor.

The protein localises to the cytoplasm. Its function is as follows. An essential GTPase which binds GTP, GDP and possibly (p)ppGpp with moderate affinity, with high nucleotide exchange rates and a fairly low GTP hydrolysis rate. Plays a role in control of the cell cycle, stress response, ribosome biogenesis and in those bacteria that undergo differentiation, in morphogenesis control. The protein is GTPase Obg of Cereibacter sphaeroides (strain KD131 / KCTC 12085) (Rhodobacter sphaeroides).